We begin with the raw amino-acid sequence, 586 residues long: Glutathione hydrolase 5 proenzyme (586 aa).

Residues 1-8 (MARGYGAT) are Cytoplasmic-facing. The helical; Signal-anchor for type II membrane protein transmembrane segment at 9-29 (VSLVLLGLGLALAVIVLAVVL) threads the bilayer. The Extracellular segment spans residues 30–586 (SRHQAPCGPQ…LRKSGEAAGY (557 aa)). N-linked (GlcNAc...) asparagine glycosylation occurs at N98. R110 contributes to the L-glutamate binding site. N-linked (GlcNAc...) asparagine glycans are attached at residues N204, N303, and N347. T388 acts as the Nucleophile in catalysis. Residues T406, E427, and 469–470 (SS) each bind L-glutamate. 2 N-linked (GlcNAc...) asparagine glycosylation sites follow: N535 and N550.

The protein belongs to the gamma-glutamyltransferase family. As to quaternary structure, heterodimer composed of the light and heavy chains. The active site is located in the light chain. Cleaved by autocatalysis into a large and a small subunit. In terms of processing, glycosylated. Expressed in follicular dendritic cells in lymphoid follicles (at protein level).

The protein localises to the membrane. It carries out the reaction glutathione + H2O = L-cysteinylglycine + L-glutamate. It catalyses the reaction an S-substituted glutathione + H2O = an S-substituted L-cysteinylglycine + L-glutamate. The catalysed reaction is leukotriene C4 + H2O = leukotriene D4 + L-glutamate. The enzyme catalyses S-[(2E,6E,10E)-geranylgeranyl]-L-glutathione + H2O = S-[(2E,6E,10E)-geranylgeranyl]-L-cysteinylglycine + L-glutamate. It carries out the reaction an N-terminal (5-L-glutamyl)-[peptide] + an alpha-amino acid = 5-L-glutamyl amino acid + an N-terminal L-alpha-aminoacyl-[peptide]. Its pathway is sulfur metabolism; glutathione metabolism. It participates in lipid metabolism; leukotriene D4 biosynthesis. Inhibited by serine-borate. In terms of biological role, cleaves the gamma-glutamyl bond of extracellular glutathione tripeptide (gamma-Glu-Cys-Gly) and certain glutathione conjugates. Hydrolyzes glutathione releasing L-Glu and Cys-Gly dipeptide which is further metabolized to maintain extracellular cysteine levels but also to provide cysteine necessary for intracellular glutathione synthesis. Among glutathione-S-conjugates metabolizes leukotriene C4 (LTC4) and S-geranylgeranyl-glutathione (GGG), but is inactive toward gamma-glutamyl leucine. Converts extracellular LTC4 to LTD4 during acute inflammatory response. Acts as a negative regulator of GGG bioactivity. GGT5 (via GGG catabolism) and ABCC1 (via extracellular transport) establish GGG gradients within lymphoid tissues to position P2RY8-positive lymphocytes at germinal centers in lymphoid follicles and restrict their chemotactic transmigration from blood vessels to bone marrow parenchyma. The transpeptidation reaction, i.e. the transfer of gamma-glutamyl moiety to an acceptor molecule to yield a new gamma-glutamyl compound requires high concentration of dipeptide acceptor and is considered nonphysiological. This is Glutathione hydrolase 5 proenzyme (GGT5) from Homo sapiens (Human).